The following is a 144-amino-acid chain: D-aminoacyl-tRNA deacylase (144 aa).

The Gly-cisPro motif, important for rejection of L-amino acids motif lies at 136–137 (GP).

This sequence belongs to the DTD family. In terms of assembly, homodimer.

The protein localises to the cytoplasm. It carries out the reaction glycyl-tRNA(Ala) + H2O = tRNA(Ala) + glycine + H(+). The enzyme catalyses a D-aminoacyl-tRNA + H2O = a tRNA + a D-alpha-amino acid + H(+). Functionally, an aminoacyl-tRNA editing enzyme that deacylates mischarged D-aminoacyl-tRNAs. Also deacylates mischarged glycyl-tRNA(Ala), protecting cells against glycine mischarging by AlaRS. Acts via tRNA-based rather than protein-based catalysis; rejects L-amino acids rather than detecting D-amino acids in the active site. By recycling D-aminoacyl-tRNA to D-amino acids and free tRNA molecules, this enzyme counteracts the toxicity associated with the formation of D-aminoacyl-tRNA entities in vivo and helps enforce protein L-homochirality. The sequence is that of D-aminoacyl-tRNA deacylase from Histophilus somni (strain 129Pt) (Haemophilus somnus).